We begin with the raw amino-acid sequence, 382 residues long: Succinate--CoA ligase [ADP-forming] subunit beta (382 aa).

Positions 9 to 240 constitute an ATP-grasp domain; the sequence is KELFAKYGVK…PRDITEFEAY (232 aa). ATP-binding positions include lysine 45, 52–54, leucine 94, and glutamate 99; that span reads GRG. Positions 193 and 207 each coordinate Mg(2+). Substrate-binding positions include asparagine 260 and 317–319; that span reads GIT.

Belongs to the succinate/malate CoA ligase beta subunit family. Heterotetramer of two alpha and two beta subunits. The cofactor is Mg(2+).

It carries out the reaction succinate + ATP + CoA = succinyl-CoA + ADP + phosphate. The enzyme catalyses GTP + succinate + CoA = succinyl-CoA + GDP + phosphate. Its pathway is carbohydrate metabolism; tricarboxylic acid cycle; succinate from succinyl-CoA (ligase route): step 1/1. Succinyl-CoA synthetase functions in the citric acid cycle (TCA), coupling the hydrolysis of succinyl-CoA to the synthesis of either ATP or GTP and thus represents the only step of substrate-level phosphorylation in the TCA. The beta subunit provides nucleotide specificity of the enzyme and binds the substrate succinate, while the binding sites for coenzyme A and phosphate are found in the alpha subunit. This Pyrobaculum calidifontis (strain DSM 21063 / JCM 11548 / VA1) protein is Succinate--CoA ligase [ADP-forming] subunit beta.